A 425-amino-acid polypeptide reads, in one-letter code: Serine--tRNA ligase (425 aa).

An L-serine-binding site is contributed by 230–232 (TAE). 261-263 (RSE) is an ATP binding site. Residue E284 coordinates L-serine. Position 348–351 (348–351 (EISS)) interacts with ATP. S384 is an L-serine binding site.

It belongs to the class-II aminoacyl-tRNA synthetase family. Type-1 seryl-tRNA synthetase subfamily. As to quaternary structure, homodimer. The tRNA molecule binds across the dimer.

It localises to the cytoplasm. The enzyme catalyses tRNA(Ser) + L-serine + ATP = L-seryl-tRNA(Ser) + AMP + diphosphate + H(+). It catalyses the reaction tRNA(Sec) + L-serine + ATP = L-seryl-tRNA(Sec) + AMP + diphosphate + H(+). Its pathway is aminoacyl-tRNA biosynthesis; selenocysteinyl-tRNA(Sec) biosynthesis; L-seryl-tRNA(Sec) from L-serine and tRNA(Sec): step 1/1. Functionally, catalyzes the attachment of serine to tRNA(Ser). Is also able to aminoacylate tRNA(Sec) with serine, to form the misacylated tRNA L-seryl-tRNA(Sec), which will be further converted into selenocysteinyl-tRNA(Sec). The polypeptide is Serine--tRNA ligase (Streptococcus pyogenes serotype M5 (strain Manfredo)).